A 631-amino-acid chain; its full sequence is MGLPRGPEGQGLPEVETREDEEQNVKLTEILELLVAAGYFRARIKGLSPFDKVVGGMTWCITTCNFDVDVDLLFQENSTIGQKIALSEKIVSVLPRMKCPHQLEPHQIQGMDFIHIFPVVQWLVKRAIETKEEMGDYIRSYSVSQFQKTYSLPEDDDFIKRKEKAIKTVVDLSEVYKPRRKYKRHQGAEELLDEESRIHATLLEYGRRYGFSRQSKMEKAEDKKTALPAGLSATEKADAHEEDELRAAEEQRIQSLMTKMTAMANEESRLTASSVGQIVGLCSAEIKQIVSEYAEKQSELSAEESPEKLGTSQLHRRKVISLNKQIAQKTKHLEELRASHTSLQARYNEAKKTLTELKTYSEKLDKEQAALEKIESKADPSILQNLRALVAMNENLKSQEQEFKAHCREEMTRLQQEIENLKAERAPRGDEKTLSSGEPPGTLTSAMTHDEDLDRRYNMEKEKLYKIRLLQARRNREIAILHRKIDEVPSRAELIQYQKRFIELYRQISAVHKETKQFFTLYNTLDDKKVYLEKEISLLNSIHENFSQAMASPAARDQFLRQMEQIVEGIKQSRMKMEKKKQENKMRRDQLNDQYLELLEKQRLYFKTVKEFKEEGRKNEMLLSKVKAKAS.

2 disordered regions span residues 1–23 (MGLP…DEEQ) and 214–243 (QSKM…HEED). The segment at 1 to 430 (MGLPRGPEGQ…LKAERAPRGD (430 aa)) is sufficient for interaction with CCDC22. Residues 215-225 (SKMEKAEDKKT) show a composition bias toward basic and acidic residues. Phosphoserine occurs at positions 298, 301, and 305. Positions 309-631 (LGTSQLHRRK…LLSKVKAKAS (323 aa)) form a coiled coil. Positions 421 to 433 (LKAERAPRGDEKT) are enriched in basic and acidic residues. Residues 421–447 (LKAERAPRGDEKTLSSGEPPGTLTSAM) form a disordered region. A sufficient for interaction with WASHC2C region spans residues 448-631 (THDEDLDRRY…LLSKVKAKAS (184 aa)).

Belongs to the CCDC93 family. In terms of assembly, component of the commander complex consisting of the CCC subcomplex and the retriever subcomplex. Component of the CCC (COMMD/CCDC22/CCDC93) subcomplex consisting of COMMD1, COMMD2, COMMD3, COMMD4, COMMD5, COMMD6, COMMD7, COMMD8, COMMD9, COMMD10, CCDC22 and CCDC93. Forms a coiled-coil heterodimer with CCDC22; this heterodimer interacts with the guanine nucleotide exchange factor DENND10; the interaction is direct. Interacts with WASHC1. Interacts directly with WASHC2C. Interacts with SNX17 and SNX31.

Its subcellular location is the early endosome. Functionally, component of the commander complex that is essential for endosomal recycling of transmembrane cargos; the commander complex is composed of composed of the CCC subcomplex and the retriever subcomplex. Component of the CCC complex, which is involved in the regulation of endosomal recycling of surface proteins, including integrins, signaling receptor and channels. The CCC complex associates with SNX17, retriever and WASH complexes to prevent lysosomal degradation and promote cell surface recycling of numerous cargos such as integrins ITGA5:ITGB1. Involved in copper-dependent ATP7A trafficking between the trans-Golgi network and vesicles in the cell periphery; the function is proposed to depend on its association within the CCC complex and cooperation with the WASH complex on early endosomes and is dependent on its interaction with WASHC2C. (Microbial infection) The CCC complex, in collaboration with the heterotrimeric retriever complex, mediates the exit of human papillomavirus to the cell surface. The sequence is that of Coiled-coil domain-containing protein 93 (CCDC93) from Homo sapiens (Human).